A 338-amino-acid chain; its full sequence is MLIAQRPTLSEETVDEFRSRFVIEPLEPGFGYTLGNSLRRTLLSSIPGASVTSIKIDNVLHEFSTIEGVKEDVTEVILNLKGLVVSSEHDEPVTMYLRKSGAGDVTAADIAPPAGVEVHNPDLKIATLSDKGKLEMELVVERGRGYVSAVQNKGADNEIGRMPVDSIYSPVLKVTYKVEATRVEQRTDFDKLVIDVETKPSIRPRDAIASAGKTLVELFGLARELNVEAEGIDIGPSPVDEQLAADLALPVEDLQLTVRSYNCLKREGIHTVGELISRSEQDLLDIRNFGAKSIDEVKAKLVEMGLSLKDSAPGFDPHAALAAYGDDDDDAFVEDEQY.

Positions 1–226 (MLIAQRPTLS…ELFGLARELN (226 aa)) are alpha N-terminal domain (alpha-NTD). The segment at 240–338 (DEQLAADLAL…DDAFVEDEQY (99 aa)) is alpha C-terminal domain (alpha-CTD).

The protein belongs to the RNA polymerase alpha chain family. Homodimer. The RNAP catalytic core consists of 2 alpha, 1 beta, 1 beta' and 1 omega subunit. When a sigma factor is associated with the core the holoenzyme is formed, which can initiate transcription.

The catalysed reaction is RNA(n) + a ribonucleoside 5'-triphosphate = RNA(n+1) + diphosphate. Its function is as follows. DNA-dependent RNA polymerase catalyzes the transcription of DNA into RNA using the four ribonucleoside triphosphates as substrates. This Nocardioides sp. (strain ATCC BAA-499 / JS614) protein is DNA-directed RNA polymerase subunit alpha.